The primary structure comprises 352 residues: 26S proteasome regulatory subunit rpn-8 (352 aa).

Residues 16–152 enclose the MPN domain; sequence VSVAPLVLLS…TDAYFAVDEI (137 aa). A disordered region spans residues 303–352; it reads NRQQQEENDAKKKEGENGEKKEGADKKEGSPAAANGESKEKENSPKEKKK. Composition is skewed to basic and acidic residues over residues 306 to 331 and 339 to 352; these read QQEE…KKEG and ESKE…EKKK.

It belongs to the peptidase M67A family.

Functionally, acts as a regulatory subunit of the 26S proteasome which is involved in the ATP-dependent degradation of ubiquitinated proteins. The sequence is that of 26S proteasome regulatory subunit rpn-8 (rpn-8) from Neurospora crassa (strain ATCC 24698 / 74-OR23-1A / CBS 708.71 / DSM 1257 / FGSC 987).